The primary structure comprises 479 residues: PTS system sucrose-specific EIIBC component (479 aa).

Residues 4–87 (PAVAKELLTL…AKLTGMSEMS (84 aa)) enclose the PTS EIIB type-1 domain. Catalysis depends on cysteine 26, which acts as the Phosphocysteine intermediate; for EIIB activity. 11 helical membrane passes run 112 to 132 (IFVP…IYNL), 158 to 178 (MINT…AFSA), 182 to 202 (FGGN…PDLL), 204 to 224 (GWGF…ILGF), 232 to 252 (QGSV…ELGL), 264 to 284 (LTPL…VGPF), 303 to 323 (AGFV…ITGM), 345 to 365 (FIFP…LAVG), 376 to 396 (IAIP…MFGV), 403 to 423 (PFIA…MFNV), and 448 to 468 (IAGM…LGIG). Residues 120–477 (IVAGGLLMGI…GDRAKVGKKA (358 aa)) form the PTS EIIC type-1 domain.

It is found in the cell inner membrane. The enzyme catalyses N(pros)-phospho-L-histidyl-[protein](out) + sucrose = sucrose 6(G)-phosphate(in) + L-histidyl-[protein]. The phosphoenolpyruvate-dependent sugar phosphotransferase system (sugar PTS), a major carbohydrate active transport system, catalyzes the phosphorylation of incoming sugar substrates concomitantly with their translocation across the cell membrane. This system is involved in sucrose transport. The chain is PTS system sucrose-specific EIIBC component from Vibrio alginolyticus.